The following is a 314-amino-acid chain: MTSQHQEHTGTKRFSIQSDPVEIHRAIVEDGVAIIEGFLTPEQVQKLNKDVDAPLKADREQLKFKADKKDDPHFWLADFIPDHVARVHNLVDFSHCFRHEILNHELLHKICRLTFEESGDYWLGYGAVIENGPGTTEQKWHRDQPRYPLVKEGPDAPEGMLNFFTALTDFDAETGKTQYILGSNKRVELGEPDADHPIEYVGLKPGDTTIVSGKITHRGSDNRSDKMRRAMPIMIIPSILTPFDATCHLSRELVETMTPLAQKMICRRSVMIPAPGTVEVKTGIWCVNMREAGEQIGLKSNQRAKEDAEATDAV.

Fe cation is bound by residues His-141, Asp-143, and His-217.

Belongs to the PhyH family. In terms of assembly, homodimer. Fe cation serves as cofactor.

It participates in alkaloid biosynthesis; ergot alkaloid biosynthesis. In terms of biological role, dioxygenase; part of the gene cluster that mediates the biosynthesis of fungal ergot alkaloid. DmaW catalyzes the first step of ergot alkaloid biosynthesis by condensing dimethylallyl diphosphate (DMAP) and tryptophan to form 4-dimethylallyl-L-tryptophan. The second step is catalyzed by the methyltransferase easF that methylates 4-dimethylallyl-L-tryptophan in the presence of S-adenosyl-L-methionine, resulting in the formation of 4-dimethylallyl-L-abrine. The catalase easC and the FAD-dependent oxidoreductase easE then transform 4-dimethylallyl-L-abrine to chanoclavine-I which is further oxidized by easD in the presence of NAD(+), resulting in the formation of chanoclavine-I aldehyde. Agroclavine dehydrogenase easG then mediates the conversion of chanoclavine-I aldehyde to agroclavine via a non-enzymatic adduct reaction: the substrate is an iminium intermediate that is formed spontaneously from chanoclavine-I aldehyde in the presence of glutathione. The presence of easA is not required to complete this reaction. Further conversion of agroclavine to paspalic acid is a two-step process involving oxidation of agroclavine to elymoclavine and of elymoclavine to paspalic acid, the second step being performed by the elymoclavine oxidase cloA. Paspalic acid is then further converted to D-lysergic acid. Ergopeptines are assembled from D-lysergic acid and three different amino acids by the D-lysergyl-peptide-synthetases composed each of a monomudular and a trimodular nonribosomal peptide synthetase subunit. LpsB and lpsC encode the monomodular subunits responsible for D-lysergic acid activation and incorporation into the ergopeptine backbone. LpsA1 and A2 subunits encode the trimodular nonribosomal peptide synthetase assembling the tripeptide portion of ergopeptines. LpsA1 is responsible for formation of the major ergopeptine, ergotamine, and lpsA2 for alpha-ergocryptine, the minor ergopeptine of the total alkaloid mixture elaborated by C.purpurea. D-lysergyl-tripeptides are assembled by the nonribosomal peptide synthetases and released as N-(D-lysergyl-aminoacyl)-lactams. Cyclolization of the D-lysergyl-tripeptides is performed by the Fe(2+)/2-ketoglutarate-dependent dioxygenase easH which introduces a hydroxyl group into N-(D-lysergyl-aminoacyl)-lactam at alpha-C of the aminoacyl residue followed by spontaneous condensation with the terminal lactam carbonyl group. The polypeptide is Dioxygenase easH (Claviceps purpurea (strain 20.1) (Ergot fungus)).